Here is a 335-residue protein sequence, read N- to C-terminus: Glutamyl-tRNA reductase (335 aa).

Substrate contacts are provided by residues 60–63 (TCHR), S110, 115–117 (ETE), and Q121. The active-site Nucleophile is the C61. 189 to 194 (GYSEIN) contacts NADP(+).

This sequence belongs to the glutamyl-tRNA reductase family. As to quaternary structure, homodimer.

It catalyses the reaction (S)-4-amino-5-oxopentanoate + tRNA(Glu) + NADP(+) = L-glutamyl-tRNA(Glu) + NADPH + H(+). The protein operates within porphyrin-containing compound metabolism; protoporphyrin-IX biosynthesis; 5-aminolevulinate from L-glutamyl-tRNA(Glu): step 1/2. Functionally, catalyzes the NADPH-dependent reduction of glutamyl-tRNA(Glu) to glutamate 1-semialdehyde (GSA). This chain is Glutamyl-tRNA reductase, found in Chlamydia trachomatis serovar D (strain ATCC VR-885 / DSM 19411 / UW-3/Cx).